Here is a 174-residue protein sequence, read N- to C-terminus: Flavodoxin (174 aa).

One can recognise a Flavodoxin-like domain in the interval 4-166 (IGIFFGSDTG…RIIQWTKKIK (163 aa)).

The protein belongs to the flavodoxin family. FMN is required as a cofactor.

Functionally, low-potential electron donor to a number of redox enzymes. In Buchnera aphidicola subsp. Baizongia pistaciae (strain Bp), this protein is Flavodoxin (fldA).